Here is a 106-residue protein sequence, read N- to C-terminus: UPF0235 protein OCAR_4310/OCA5_c02140 (106 aa).

The protein belongs to the UPF0235 family.

In Afipia carboxidovorans (strain ATCC 49405 / DSM 1227 / KCTC 32145 / OM5) (Oligotropha carboxidovorans), this protein is UPF0235 protein OCAR_4310/OCA5_c02140.